The following is a 785-amino-acid chain: Mitochondrial intermediate peptidase (785 aa).

A mitochondrion-targeting transit peptide spans 1 to 27 (MLKAVMPRPWVCSRCVKRQIQSSRGLA). Residues 26–52 (LATASTQYREPRPVPTDHSAPGAKHDD) are disordered. His-566 serves as a coordination point for Zn(2+). The active site involves Glu-567. His-570 and His-573 together coordinate Zn(2+).

The protein belongs to the peptidase M3 family. It depends on Zn(2+) as a cofactor.

It localises to the mitochondrion matrix. The enzyme catalyses Release of an N-terminal octapeptide as second stage of processing of some proteins imported into the mitochondrion.. Its function is as follows. Cleaves proteins, imported into the mitochondrion, to their mature size. While most mitochondrial precursor proteins are processed to the mature form in one step by mitochondrial processing peptidase (MPP), the sequential cleavage by MIP of an octapeptide after initial processing by MPP is a required step for a subgroup of nuclear-encoded precursor proteins destined for the matrix or the inner membrane. This chain is Mitochondrial intermediate peptidase (oct1), found in Sclerotinia sclerotiorum (strain ATCC 18683 / 1980 / Ss-1) (White mold).